An 842-amino-acid chain; its full sequence is Oxysterol-binding protein-related protein 7 (842 aa).

Positions 1 to 28 (MDFQERDPPFLPESAQSSKPSSAQQASE) are disordered. Residues 14 to 27 (SAQSSKPSSAQQAS) are compositionally biased toward low complexity. The region spanning 47–142 (PERQEGHLLK…WVAQLRAHRL (96 aa)) is the PH domain. Thr-171 carries the post-translational modification Phosphothreonine. Phosphoserine occurs at positions 217, 226, 256, and 272. A disordered region spans residues 330–369 (DMHQGSELSRMGVSEASTGQRRLHSLSTSSDTTADSFSSL). A compositionally biased stretch (low complexity) spans 354–369 (SLSTSSDTTADSFSSL).

This sequence belongs to the OSBP family. In terms of tissue distribution, expressed in epithelium of small and large intestines (at protein level). Expressed in stomach, duodenum, jejunum, ascending colon, spleen, thymus, lymph node, trachea and leukocytes.

The protein resides in the cytoplasm. The protein localises to the cytosol. Its subcellular location is the endoplasmic reticulum membrane. It is found in the cell membrane. The protein is Oxysterol-binding protein-related protein 7 (OSBPL7) of Homo sapiens (Human).